The primary structure comprises 54 residues: ATP synthase protein 8 (54 aa).

A helical transmembrane segment spans residues 8–28; sequence WWIINFFIIWTAILLTLVILV.

This sequence belongs to the ATPase protein 8 family. F-type ATPases have 2 components, CF(1) - the catalytic core - and CF(0) - the membrane proton channel.

It localises to the mitochondrion membrane. Its function is as follows. Mitochondrial membrane ATP synthase (F(1)F(0) ATP synthase or Complex V) produces ATP from ADP in the presence of a proton gradient across the membrane which is generated by electron transport complexes of the respiratory chain. F-type ATPases consist of two structural domains, F(1) - containing the extramembraneous catalytic core and F(0) - containing the membrane proton channel, linked together by a central stalk and a peripheral stalk. During catalysis, ATP synthesis in the catalytic domain of F(1) is coupled via a rotary mechanism of the central stalk subunits to proton translocation. Part of the complex F(0) domain. Minor subunit located with subunit a in the membrane. The chain is ATP synthase protein 8 (MT-ATP8) from Paracentrotus lividus (Common sea urchin).